We begin with the raw amino-acid sequence, 466 residues long: Fumarate hydratase class II (466 aa).

Substrate contacts are provided by residues 99–101, 129–132, 139–141, and threonine 187; these read SGT, HPND, and SSN. Histidine 188 acts as the Proton donor/acceptor in catalysis. The active site involves serine 318. Residues serine 319 and 324–326 contribute to the substrate site; that span reads KVN.

This sequence belongs to the class-II fumarase/aspartase family. Fumarase subfamily. As to quaternary structure, homotetramer.

It is found in the cytoplasm. It carries out the reaction (S)-malate = fumarate + H2O. It functions in the pathway carbohydrate metabolism; tricarboxylic acid cycle; (S)-malate from fumarate: step 1/1. In terms of biological role, involved in the TCA cycle. Catalyzes the stereospecific interconversion of fumarate to L-malate. The chain is Fumarate hydratase class II from Thermus aquaticus.